A 156-amino-acid polypeptide reads, in one-letter code: Ribosomal RNA large subunit methyltransferase H (156 aa).

S-adenosyl-L-methionine-binding positions include L73, G104, and I123–L128.

The protein belongs to the RNA methyltransferase RlmH family. Homodimer.

Its subcellular location is the cytoplasm. It carries out the reaction pseudouridine(1915) in 23S rRNA + S-adenosyl-L-methionine = N(3)-methylpseudouridine(1915) in 23S rRNA + S-adenosyl-L-homocysteine + H(+). In terms of biological role, specifically methylates the pseudouridine at position 1915 (m3Psi1915) in 23S rRNA. This chain is Ribosomal RNA large subunit methyltransferase H, found in Burkholderia multivorans (strain ATCC 17616 / 249).